The sequence spans 176 residues: N-alpha-acetyltransferase NAT5 (176 aa).

Residues 14–176 (NNLGMLTKLA…DAILLKKHIS (163 aa)) form the N-acetyltransferase domain.

The protein belongs to the acetyltransferase family. As to quaternary structure, component of the N-terminal acetyltransferase A (NatA) complex, which is composed of ARD1, NAT1 and NAT5.

The protein localises to the cytoplasm. It carries out the reaction N-terminal L-methionyl-L-alanyl-[protein] + acetyl-CoA = N-terminal N(alpha)-acetyl-L-methionyl-L-alanyl-[protein] + CoA + H(+). It catalyses the reaction N-terminal L-methionyl-L-seryl-[protein] + acetyl-CoA = N-terminal N(alpha)-acetyl-L-methionyl-L-seryl-[protein] + CoA + H(+). The enzyme catalyses N-terminal L-methionyl-L-valyl-[protein] + acetyl-CoA = N-terminal N(alpha)-acetyl-L-methionyl-L-valyl-[protein] + CoA + H(+). The catalysed reaction is N-terminal L-methionyl-L-threonyl-[protein] + acetyl-CoA = N-terminal N(alpha)-acetyl-L-methionyl-L-threonyl-[protein] + CoA + H(+). It carries out the reaction N-terminal L-methionyl-L-lysyl-[protein] + acetyl-CoA = N-terminal N(alpha)-acetyl-L-methionyl-L-lysyl-[protein] + CoA + H(+). It catalyses the reaction N-terminal L-methionyl-L-leucyl-[protein] + acetyl-CoA = N-terminal N(alpha)-acetyl-L-methionyl-L-leucyl-[protein] + CoA + H(+). The enzyme catalyses N-terminal L-methionyl-L-phenylalanyl-[protein] + acetyl-CoA = N-terminal N(alpha)-acetyl-L-methionyl-L-phenylalanyl-[protein] + CoA + H(+). The catalysed reaction is N-terminal L-methionyl-L-tyrosyl-[protein] + acetyl-CoA = N-terminal N(alpha)-acetyl-L-methionyl-L-tyrosyl-[protein] + CoA + H(+). In terms of biological role, N-alpha-acetyltransferase that acetylates the N-terminus of proteins that retain their initiating methionine. Has a broad substrate specificity: able to acetylate the initiator methionine of most peptides. Non-essential component of the NatA N-terminal acetyltransferase. In Saccharomyces cerevisiae (strain ATCC 204508 / S288c) (Baker's yeast), this protein is N-alpha-acetyltransferase NAT5.